Here is a 308-residue protein sequence, read N- to C-terminus: Ribosomal protein L11 methyltransferase (308 aa).

4 residues coordinate S-adenosyl-L-methionine: Thr-157, Gly-178, Asp-200, and Asn-243.

This sequence belongs to the methyltransferase superfamily. PrmA family.

It is found in the cytoplasm. It carries out the reaction L-lysyl-[protein] + 3 S-adenosyl-L-methionine = N(6),N(6),N(6)-trimethyl-L-lysyl-[protein] + 3 S-adenosyl-L-homocysteine + 3 H(+). In terms of biological role, methylates ribosomal protein L11. The polypeptide is Ribosomal protein L11 methyltransferase (Desulforamulus reducens (strain ATCC BAA-1160 / DSM 100696 / MI-1) (Desulfotomaculum reducens)).